The primary structure comprises 1349 residues: DNA-directed RNA polymerase subunit beta' (1349 aa).

Residues Cys70, Cys72, Cys85, and Cys88 each contribute to the Zn(2+) site. Asp460, Asp462, and Asp464 together coordinate Mg(2+). The Zn(2+) site is built by Cys801, Cys875, Cys882, and Cys885.

The protein belongs to the RNA polymerase beta' chain family. As to quaternary structure, the RNAP catalytic core consists of 2 alpha, 1 beta, 1 beta' and 1 omega subunit. When a sigma factor is associated with the core the holoenzyme is formed, which can initiate transcription. Mg(2+) serves as cofactor. The cofactor is Zn(2+).

It catalyses the reaction RNA(n) + a ribonucleoside 5'-triphosphate = RNA(n+1) + diphosphate. Its function is as follows. DNA-dependent RNA polymerase catalyzes the transcription of DNA into RNA using the four ribonucleoside triphosphates as substrates. In Desulfotalea psychrophila (strain LSv54 / DSM 12343), this protein is DNA-directed RNA polymerase subunit beta'.